A 740-amino-acid chain; its full sequence is Alpha-1,6-mannosylglycoprotein 6-beta-N-acetylglucosaminyltransferase A (740 aa).

Residues 1–13 lie on the Cytoplasmic side of the membrane; it reads MAFFTPWKLSSQK. Residues 14–30 traverse the membrane as a helical; Signal-anchor for type II membrane protein segment; it reads LGFFLVTFGFIWGMMLL. Over 31–740 the chain is Lumenal; it reads HFTIQQRTQP…GQVALCKDCL (710 aa). N-linked (GlcNAc...) asparagine glycans are attached at residues Asn-109, Asn-114, and Asn-117. 9 cysteine pairs are disulfide-bonded: Cys-144/Cys-182, Cys-155/Cys-195, Cys-171/Cys-337, Cys-371/Cys-625, Cys-648/Cys-723, Cys-652/Cys-725, Cys-659/Cys-712, Cys-680/Cys-701, and Cys-736/Cys-739. The sufficient for catalytic activity stretch occupies residues 212–740; the sequence is NSLAEIRTDF…GQVALCKDCL (529 aa). Asn-333 is a glycosylation site (N-linked (GlcNAc...) asparagine). 377–378 provides a ligand contact to substrate; it reads DS. Asn-432 and Asn-446 each carry an N-linked (GlcNAc...) asparagine glycan. Glu-525 contributes to the UDP-N-acetyl-alpha-D-glucosamine binding site. Substrate is bound at residue Lys-553.

Belongs to the glycosyltransferase 18 family. In terms of processing, N-glycosylated. Post-translationally, a secreted form is released from the membrane after cleavage by gamma-secretase.

It localises to the golgi apparatus membrane. The protein localises to the secreted. The catalysed reaction is N(4)-{beta-D-GlcNAc-(1-&gt;2)-[beta-D-GlcNAc-(1-&gt;4)]-alpha-D-Man-(1-&gt;3)-[beta-D-GlcNAc-(1-&gt;2)-alpha-D-Man-(1-&gt;6)]-beta-D-Man-(1-&gt;4)-beta-D-GlcNAc-(1-&gt;4)-beta-D-GlcNAc}-L-asparaginyl-[protein] + UDP-N-acetyl-alpha-D-glucosamine = N(4)-{beta-D-GlcNAc-(1-&gt;2)-[beta-D-GlcNAc-(1-&gt;4)]-alpha-D-Man-(1-&gt;3)-[beta-D-GlcNAc-(1-&gt;2)-[beta-D-GlcNAc-(1-&gt;6)]-alpha-D-Man-(1-&gt;6)]-beta-D-Man-(1-&gt;4)-beta-D-GlcNAc-(1-&gt;4)-beta-D-GlcNAc}-L-asparaginyl-[protein] + UDP + H(+). Its pathway is protein modification; protein glycosylation. Catalyzes the addition of N-acetylglucosamine (GlcNAc) in beta 1-6 linkage to the alpha-linked mannose of biantennary N-linked oligosaccharides. Catalyzes an important step in the biosynthesis of branched, complex-type N-glycans, such as those found on EGFR, TGFR (TGF-beta receptor) and CDH2. Via its role in the biosynthesis of complex N-glycans, plays an important role in the activation of cellular signaling pathways, reorganization of the actin cytoskeleton, cell-cell adhesion and cell migration. MGAT5-dependent EGFR N-glycosylation enhances the interaction between EGFR and LGALS3 and thereby prevents rapid EGFR endocytosis and prolongs EGFR signaling. Required for efficient interaction between TGFB1 and its receptor. Enhances activation of intracellular signaling pathways by several types of growth factors, including FGF2, PDGF, IGF, TGFB1 and EGF. MGAT5-dependent CDH2 N-glycosylation inhibits CDH2-mediated homotypic cell-cell adhesion and contributes to the regulation of downstream signaling pathways. Promotes cell migration. Contributes to the regulation of the inflammatory response. MGAT5-dependent TCR N-glycosylation enhances the interaction between TCR and LGALS3, limits agonist-induced TCR clustering, and thereby dampens TCR-mediated responses to antigens. Required for normal leukocyte evasation and accumulation at sites of inflammation. Inhibits attachment of monocytes to the vascular endothelium and subsequent monocyte diapedesis. Functionally, promotes proliferation of umbilical vein endothelial cells and angiogenesis, at least in part by promoting the release of the growth factor FGF2 from the extracellular matrix. The sequence is that of Alpha-1,6-mannosylglycoprotein 6-beta-N-acetylglucosaminyltransferase A (MGAT5) from Cricetulus griseus (Chinese hamster).